The primary structure comprises 461 residues: Elongation factor 1-alpha, oocyte form (461 aa).

The residue at position 2 (Gly2) is a N,N,N-trimethylglycine. The tr-type G domain occupies 5–242 (KIHINIVVIG…DCIIPPQRPT (238 aa)). Residues 14 to 21 (GHVDSGKS) form a G1 region. Residue 14 to 21 (GHVDSGKS) participates in GTP binding. Residues 70–74 (GITID) form a G2 region. A G3 region spans residues 91 to 94 (DAPG). GTP-binding positions include 91-95 (DAPGH) and 153-156 (NKMD). Residues 153–156 (NKMD) are G4. Residues 194–196 (SGW) form a G5 region. Glu301 and Glu374 each carry 5-glutamyl glycerylphosphorylethanolamine.

The protein belongs to the TRAFAC class translation factor GTPase superfamily. Classic translation factor GTPase family. EF-Tu/EF-1A subfamily. Oocyte.

It is found in the cytoplasm. In terms of biological role, this protein promotes the GTP-dependent binding of aminoacyl-tRNA to the A-site of ribosomes during protein biosynthesis. The sequence is that of Elongation factor 1-alpha, oocyte form from Xenopus laevis (African clawed frog).